Consider the following 398-residue polypeptide: Meiosis-specific protein SPO11 (398 aa).

Positions 40-175 (CSNADVLAHI…LNIIPAQKGL (136 aa)) constitute a Topo IIA-type catalytic domain. Tyr-135 (O-(5'-phospho-DNA)-tyrosine intermediate) is an active-site residue. Residues Glu-233 and Asp-288 each contribute to the Mg(2+) site.

The protein belongs to the TOP6A family. Mg(2+) serves as cofactor.

The protein localises to the nucleus. It is found in the chromosome. The catalysed reaction is ATP-dependent breakage, passage and rejoining of double-stranded DNA.. In terms of biological role, required for meiotic recombination. Mediates DNA cleavage that forms the double-strand breaks (DSB) that initiate meiotic recombination. The action of SPO11 is important in setting off a regulatory chain of events encompassing 5' to 3' resection. When there are no SPO11-DSBs, resection of a site specific VDE-DSB takes place but it is faster than in wild-type meiosis and increases the risk of uncovering flanking homology. This is Meiosis-specific protein SPO11 (SPO11) from Saccharomyces cerevisiae (strain ATCC 204508 / S288c) (Baker's yeast).